Reading from the N-terminus, the 305-residue chain is Cysteine synthase (305 aa).

The residue at position 45 (lysine 45) is an N6-(pyridoxal phosphate)lysine. Residues asparagine 75, 179–183 (GSGGT), and serine 266 each bind pyridoxal 5'-phosphate.

This sequence belongs to the cysteine synthase/cystathionine beta-synthase family. In terms of assembly, homodimer. Pyridoxal 5'-phosphate serves as cofactor.

The enzyme catalyses O-acetyl-L-serine + hydrogen sulfide = L-cysteine + acetate. Its pathway is amino-acid biosynthesis; L-cysteine biosynthesis; L-cysteine from L-serine: step 2/2. The protein is Cysteine synthase (cysM) of Helicobacter pylori (strain J99 / ATCC 700824) (Campylobacter pylori J99).